Here is a 329-residue protein sequence, read N- to C-terminus: Helicase VP6-A (329 aa).

Disordered stretches follow at residues 27–130 (INLV…TNGG) and 189–232 (DLRR…SEEP). Basic and acidic residues-rich tracts occupy residues 36–58 (EGGK…KDGE), 65–83 (GQKE…DRRI), and 96–109 (SGER…RGDG). Lys110 contributes to the ATP binding site. The segment covering 110 to 129 (KVGGGGGDADAGVGATGTNG) has biased composition (gly residues). Basic and acidic residues-rich tracts occupy residues 189 to 207 (DLRR…ERGG) and 215 to 232 (HGDA…SEEP).

This sequence belongs to the reoviruses VP6 family. Homohexamer.

The protein resides in the virion. The catalysed reaction is ATP + H2O = ADP + phosphate + H(+). Functionally, ATP dependent RNA helicase essential for RNA packaging and viral transcription. Possesses ss- and dsRNA-binding capacity. This is Helicase VP6-A (Segment-9) from Antilocapra americana (Pronghorn).